A 104-amino-acid chain; its full sequence is MQKIRKGDKVVVLAGKDKGRSGEVLSVQPKDDTALVRGVNMIRRHQKQSQSQEGGIITKEAPIQLSNIALADPKDGKPTRVGFIFQKDGKKVRVAKRSGEVING.

It belongs to the universal ribosomal protein uL24 family. In terms of assembly, part of the 50S ribosomal subunit.

Functionally, one of two assembly initiator proteins, it binds directly to the 5'-end of the 23S rRNA, where it nucleates assembly of the 50S subunit. Its function is as follows. One of the proteins that surrounds the polypeptide exit tunnel on the outside of the subunit. The sequence is that of Large ribosomal subunit protein uL24 from Mesorhizobium japonicum (strain LMG 29417 / CECT 9101 / MAFF 303099) (Mesorhizobium loti (strain MAFF 303099)).